The chain runs to 372 residues: Cytochrome b (372 aa).

Helical transmembrane passes span 25–45, 69–90, 105–125, and 170–190; these read FGSMLLTCLALQISTGFFLAI, WTMQNLHAIGASMFFICIYIHI, WLSGTVLLITLMATAFFGYVL, and FFALHFILPFLIVSLSSIHII. Residues His-75 and His-89 each contribute to the heme b site. 2 residues coordinate heme b: His-174 and His-188. His-193 contributes to the a ubiquinone binding site. Helical transmembrane passes span 218-238, 280-300, 312-332, and 339-358; these read YKDILMITVMITTLFSIMAFA, LGGTLALLMSVIILTTAPFTH, LAQMLFWTLIATFITITWTAT, and FILISQMASIIYFSFFIINP.

The protein belongs to the cytochrome b family. The cytochrome bc1 complex contains 3 respiratory subunits (MT-CYB, CYC1 and UQCRFS1), 2 core proteins (UQCRC1 and UQCRC2) and probably 6 low-molecular weight proteins. Requires heme b as cofactor.

The protein localises to the mitochondrion inner membrane. Functionally, component of the ubiquinol-cytochrome c reductase complex (complex III or cytochrome b-c1 complex) that is part of the mitochondrial respiratory chain. The b-c1 complex mediates electron transfer from ubiquinol to cytochrome c. Contributes to the generation of a proton gradient across the mitochondrial membrane that is then used for ATP synthesis. This chain is Cytochrome b (MT-CYB), found in Acanthophis antarcticus (Common death adder).